The chain runs to 213 residues: Glycerol-3-phosphate acyltransferase (213 aa).

5 consecutive transmembrane segments (helical) span residues 3–23 (ILLAALVAYLIGSVSFAVVVS), 51–71 (KAAILTLVGDAFKGWIAVWLA), 78–98 (DVAIAWVAIAVFLGHLYPVFF), 115–135 (AVHPVLGLATALTWLIVAFFF), and 140–160 (LAALVAAVFAPVFDVFLFGMP).

This sequence belongs to the PlsY family. In terms of assembly, probably interacts with PlsX.

The protein localises to the cell inner membrane. It carries out the reaction an acyl phosphate + sn-glycerol 3-phosphate = a 1-acyl-sn-glycero-3-phosphate + phosphate. The protein operates within lipid metabolism; phospholipid metabolism. Functionally, catalyzes the transfer of an acyl group from acyl-phosphate (acyl-PO(4)) to glycerol-3-phosphate (G3P) to form lysophosphatidic acid (LPA). This enzyme utilizes acyl-phosphate as fatty acyl donor, but not acyl-CoA or acyl-ACP. This chain is Glycerol-3-phosphate acyltransferase, found in Burkholderia cenocepacia (strain HI2424).